Consider the following 468-residue polypeptide: Transmembrane protein 151B (468 aa).

The segment at 1–25 (MPEDGGGDSGDVPEIIPDGEPLREE) is disordered. The next 2 helical transmembrane spans lie at 45–65 (CLLL…CRLA) and 98–118 (YLYI…AECW). A disordered region spans residues 384–438 (VSSNSLPPARPSGPRLPFSRSRLSLGAGGRATPGVFRSLSGGPLGRRGEDTEPLE).

This sequence belongs to the TMEM151 family.

It localises to the membrane. This Bos taurus (Bovine) protein is Transmembrane protein 151B (TMEM151B).